We begin with the raw amino-acid sequence, 307 residues long: 3-methyl-2-oxobutanoate hydroxymethyltransferase (307 aa).

Mg(2+) is bound by residues Asp61 and Asp100. Residues 61–62 (DS), Asp100, and Lys130 each bind 3-methyl-2-oxobutanoate. Glu132 serves as a coordination point for Mg(2+). Residue Glu199 is the Proton acceptor of the active site.

Belongs to the PanB family. As to quaternary structure, homodecamer; pentamer of dimers. Mg(2+) serves as cofactor.

The protein localises to the cytoplasm. It carries out the reaction 3-methyl-2-oxobutanoate + (6R)-5,10-methylene-5,6,7,8-tetrahydrofolate + H2O = 2-dehydropantoate + (6S)-5,6,7,8-tetrahydrofolate. Its pathway is cofactor biosynthesis; (R)-pantothenate biosynthesis; (R)-pantoate from 3-methyl-2-oxobutanoate: step 1/2. Its function is as follows. Catalyzes the reversible reaction in which hydroxymethyl group from 5,10-methylenetetrahydrofolate is transferred onto alpha-ketoisovalerate to form ketopantoate. The sequence is that of 3-methyl-2-oxobutanoate hydroxymethyltransferase from Nitratidesulfovibrio vulgaris (strain ATCC 29579 / DSM 644 / CCUG 34227 / NCIMB 8303 / VKM B-1760 / Hildenborough) (Desulfovibrio vulgaris).